The sequence spans 1641 residues: MQDVRNINLVNNSSNSHDSSLANSKMPRNFKLLSDPQLVKCGTRLYRYDGLMPGDPSYPTITPRDPRNPLIRIRARAVEPLMLLIPRFVIDSDYVGQPPAVEVTIVNLNDNIDKQFLASMLDKCGTSDEINIYHHPITNKHLGIARIVFDSTKGARQFVEKYNQKSVMGKILDVFCDPFGATLKKSLESLTNSVAGKQLIGPKVTPQWTFQQAALEDTEFIHGYPEKNGEHIKDIYTTQTNHEIPNRSRDRNWNRDKERERDRHFKERSRHSSERSYDRDRGMRENVGTSIRRRRTFYRRRSSDISPEDSRDILIMTRERSRDSDSRPRDYCRSRERESFRDRKRSHEKGRDQPREKREHYYNSSKDREYRGRDRDRSAEIDQRDRGSLKYCSRYSLHEYIETDVRRSSNTISSYYSASSLPIASHGFNSCSFPSIENIKTWSDRRAWTAFQPDFHPVQPPPPPPEEIDNWDEEEHDKNSIVPTHYGCMAKLQPPVPSNVNFATKLQSVTQPNSDPGTVDLDTRIALIFKGKTFGNAPPFLQMDSSDSETDQGKPEVFSDVNSDSNNSENKKRSCEKNNKVLHQPNEASDISSDEELIGKKDKSKLSLICEKEVNDDNMSLSSLSSQEDPIQTKEGAEYKSIMSSYMYSHSNQNPFYYHASGYGHYLSGIPSESASRLFSNGAYVHSEYLKAVASFNFDSFSKPYDYNKGALSDQNDGIRQKVKQVIGYIVEELKQILKRDVNKRMIEITAFKHFETWWDEHTSKARSKPLFEKADSTVNTPLNCIKDTSYNEKNPDINLLINAHREVADFQSYSSIGLRAAMPKLPSFRRIRKHPSPIPTKRNFLERDLSDQEEMVQRSDSDKEDSNVEISDTARSKIKGPVPIQESDSKSHTSGLNSKRKGSASSFFSSSSSSTSSEAEYEAIDCVEKARTSEEDSPRGYGQRNLNQRTTTIRNRNLVGTMDVINVRNLCSGSNEFKKENVTKRTKKNIYSDTDEDNDRTLFPALKEKNISTILSDLEEISKDSCIGLDENGIEPTILRKIPNTPKLNEECRRSLTPVPPPGYNEEEIKKKVDCKQKPSFEYDRIYSDSEEEKEYQERRKRNTEYMAQMEREFLEEQEKRIEKSLDKNLQSPNNIVKNNNSPRNKNDETRKTAISQTRSCFESASKVDTTLVNIISVENDINEFGPHEEGDVLTNGCNKMYTNSKGKTKRTQSPVYSEGGSSQASQASQVALEHCYSLPPHSVSLGDYPSGKVNETKNILKREAENIAIVSQMTRTGPGRPRKDPICIQKKKRDLAPRMSNVKSKMTPNGDEWPDLAHKNVHFVPCDMYKTRDQNEEMVILYTFLTKGIDAEDINFIKMSYLDHLHKEPYAMFLNNTHWVDHCTTDRAFWPPPSKKRRKDDELIRHKTGCARTEGFYKLDVREKAKHKYHYAKANTEDSFNEDRSDEPTALTNHHHNKLISKMQGISREARSNQRRLLTAFGSMGESELLKFNQLKFRKKQLKFAKSAIHDWGLFAMEPIAADEMVIEYVGQMIRPVVADLRETKYEAIGIGSSYLFRIDMETIIDATKCGNLARFINHSCNPNCYAKVITIESEKKIVIYSKQPIGINEEITYDYKFPLEDEKIPCLCGAQGCRGTLN.

The interval Met1–Asn23 is disordered. Over residues Asn8 to Asn23 the composition is skewed to low complexity. The RRM domain maps to Val101–Phe179. Disordered stretches follow at residues Tyr236 to Arg384, Ala537 to Glu596, Arg831 to Ser915, Lys930 to Gln949, Gln1119 to Ala1155, and Asn1205 to Ala1226. Over residues Ile244–Arg284 the composition is skewed to basic and acidic residues. The span at Ile291–Arg300 shows a compositional bias: basic residues. 2 stretches are compositionally biased toward basic and acidic residues: residues Glu308–Arg341 and Lys349–Arg384. The span at Glu556–Ser568 shows a compositional bias: low complexity. 2 stretches are compositionally biased toward basic and acidic residues: residues Glu569–Asn579 and Asn844–Ser867. The segment covering Ser904 to Ser915 has biased composition (low complexity). Basic and acidic residues-rich tracts occupy residues Lys930–Pro939 and Gln1119–Asp1128. A coiled-coil region spans residues Ser1091–Gln1132. 2 stretches are compositionally biased toward polar residues: residues Lys1129–Arg1145 and Asn1205–Val1217. Residues Arg1473–Arg1478 carry the RxxxRR motif motif. The region spanning Lys1502 to Lys1619 is the SET domain. Tyr1618 serves as a coordination point for S-adenosyl-L-methionine. Positions Glu1625 to Asn1641 constitute a Post-SET domain.

This sequence belongs to the class V-like SAM-binding methyltransferase superfamily. Component of the Set1C/COMPASS complex, composed at least of the catalytic subunit Set1, wds/WDR5, Wdr82, Rbbp5, ash2, Cfp1/CXXC1, hcf and Dpy-30L1.

Its subcellular location is the nucleus. It localises to the chromosome. The catalysed reaction is L-lysyl(4)-[histone H3] + 3 S-adenosyl-L-methionine = N(6),N(6),N(6)-trimethyl-L-lysyl(4)-[histone H3] + 3 S-adenosyl-L-homocysteine + 3 H(+). The enzyme catalyses N(6)-methyl-L-lysyl(4)-[histone H3] + S-adenosyl-L-methionine = N(6),N(6)-dimethyl-L-lysyl(4)-[histone H3] + S-adenosyl-L-homocysteine + H(+). It catalyses the reaction N(6),N(6)-dimethyl-L-lysyl(4)-[histone H3] + S-adenosyl-L-methionine = N(6),N(6),N(6)-trimethyl-L-lysyl(4)-[histone H3] + S-adenosyl-L-homocysteine + H(+). Its function is as follows. Catalytic component of the COMPASS (Set1C) complex that specifically mono-, di- and trimethylates histone H3 to form H3K4me1/2/3. Binds RNAs which might negatively affect its histone methyltransferase activity. COMPASS recognizes ubiquitinated H2B on one face of the nucleosome which stimulates the methylation of H3 on the opposing face. Set1-dependent trimethylation regulates chromatin changes at active promoters that ensure optimal RNA polymerase II release into productive elongation, thereby contributing to optimal transcription. This Drosophila melanogaster (Fruit fly) protein is Histone-lysine N-methyltransferase SETD1.